A 180-amino-acid polypeptide reads, in one-letter code: Oligoribonuclease (180 aa).

Residues 7–170 (LIWIDLEMTG…DDIRESIAEL (164 aa)) enclose the Exonuclease domain. The active site involves Tyr-128.

The protein belongs to the oligoribonuclease family.

The protein localises to the cytoplasm. Functionally, 3'-to-5' exoribonuclease specific for small oligoribonucleotides. In Pseudomonas putida (strain ATCC 700007 / DSM 6899 / JCM 31910 / BCRC 17059 / LMG 24140 / F1), this protein is Oligoribonuclease.